A 424-amino-acid chain; its full sequence is Histidine--tRNA ligase (424 aa).

It belongs to the class-II aminoacyl-tRNA synthetase family. In terms of assembly, homodimer.

Its subcellular location is the cytoplasm. It catalyses the reaction tRNA(His) + L-histidine + ATP = L-histidyl-tRNA(His) + AMP + diphosphate + H(+). The chain is Histidine--tRNA ligase from Escherichia coli O127:H6 (strain E2348/69 / EPEC).